We begin with the raw amino-acid sequence, 209 residues long: Mitochondrial import inner membrane translocase subunit Tim23 (209 aa).

3 helical membrane-spanning segments follow: residues Phe-73–Leu-93, Ala-125–Val-145, and Gly-180–Ile-200.

Belongs to the Tim17/Tim22/Tim23 family. As to quaternary structure, component of the TIM23 complex at least composed of timm23, timm17 and timm50. The complex interacts with the timm44 component of the PAM complex.

It localises to the mitochondrion inner membrane. Functionally, essential component of the TIM23 complex, a complex that mediates the translocation of transit peptide-containing proteins across the mitochondrial inner membrane. This is Mitochondrial import inner membrane translocase subunit Tim23 (timm23) from Xenopus laevis (African clawed frog).